The primary structure comprises 295 residues: MPWIQIKLNATNENAELIGDMLMEETGALSVTFLDAHDTPVFEPLPGETRLWGDTDVLALYDAEADTQLIMSQIKASNMLAEGFAYKIEQLEDKDWEREWMDNFHPMKFGQRLWICPSWRDIPDPTAVNVMLDPGLAFGTGTHPTTALCLEWLEGLDLSGKTVIDFGCGSGILAIAAIKLGAEKVIGIDIDPQALLASKDNAQRNGVADQLDVYLPQDQPEGLLADVVVANILAAPLRELSSIIKGLVKPNGQLAMSGVLDTQAEDVANYYRDELHIDPIVEQSEWCRISGRKQG.

Threonine 146, glycine 167, aspartate 189, and asparagine 231 together coordinate S-adenosyl-L-methionine.

This sequence belongs to the methyltransferase superfamily. PrmA family.

It localises to the cytoplasm. The enzyme catalyses L-lysyl-[protein] + 3 S-adenosyl-L-methionine = N(6),N(6),N(6)-trimethyl-L-lysyl-[protein] + 3 S-adenosyl-L-homocysteine + 3 H(+). Functionally, methylates ribosomal protein L11. This chain is Ribosomal protein L11 methyltransferase, found in Vibrio vulnificus (strain YJ016).